The sequence spans 206 residues: LexA repressor (206 aa).

The segment at residues arginine 28–lysine 48 is a DNA-binding region (H-T-H motif). Residues serine 123 and lysine 160 each act as for autocatalytic cleavage activity in the active site.

It belongs to the peptidase S24 family. As to quaternary structure, homodimer.

It carries out the reaction Hydrolysis of Ala-|-Gly bond in repressor LexA.. Represses a number of genes involved in the response to DNA damage (SOS response), including recA and lexA. In the presence of single-stranded DNA, RecA interacts with LexA causing an autocatalytic cleavage which disrupts the DNA-binding part of LexA, leading to derepression of the SOS regulon and eventually DNA repair. The polypeptide is LexA repressor (Vibrio parahaemolyticus serotype O3:K6 (strain RIMD 2210633)).